The chain runs to 152 residues: Ribosome maturation factor RimP (152 aa).

This sequence belongs to the RimP family.

The protein localises to the cytoplasm. Required for maturation of 30S ribosomal subunits. The sequence is that of Ribosome maturation factor RimP from Salmonella arizonae (strain ATCC BAA-731 / CDC346-86 / RSK2980).